We begin with the raw amino-acid sequence, 328 residues long: Tetraacyldisaccharide 4'-kinase (328 aa).

59-66 (TAGGNGKT) provides a ligand contact to ATP.

This sequence belongs to the LpxK family.

It carries out the reaction a lipid A disaccharide + ATP = a lipid IVA + ADP + H(+). The protein operates within glycolipid biosynthesis; lipid IV(A) biosynthesis; lipid IV(A) from (3R)-3-hydroxytetradecanoyl-[acyl-carrier-protein] and UDP-N-acetyl-alpha-D-glucosamine: step 6/6. In terms of biological role, transfers the gamma-phosphate of ATP to the 4'-position of a tetraacyldisaccharide 1-phosphate intermediate (termed DS-1-P) to form tetraacyldisaccharide 1,4'-bis-phosphate (lipid IVA). The chain is Tetraacyldisaccharide 4'-kinase from Aliivibrio fischeri (strain ATCC 700601 / ES114) (Vibrio fischeri).